The chain runs to 486 residues: Small ribosomal subunit protein uS4m (486 aa).

Positions 103–172 (KRLDFALFRA…AKKPSFQEAL (70 aa)) constitute an S4 RNA-binding domain.

It belongs to the universal ribosomal protein uS4 family. Component of the mitochondrial small ribosomal subunit (mt-SSU). Mature yeast 74S mitochondrial ribosomes consist of a small (37S) and a large (54S) subunit. The 37S small subunit contains a 15S ribosomal RNA (15S mt-rRNA) and 34 different proteins. The 54S large subunit contains a 21S rRNA (21S mt-rRNA) and 46 different proteins. uS3m, uS4m and uS5m form the narrow entry site of the mRNA channel.

The protein resides in the mitochondrion. Component of the mitochondrial ribosome (mitoribosome), a dedicated translation machinery responsible for the synthesis of mitochondrial genome-encoded proteins, including at least some of the essential transmembrane subunits of the mitochondrial respiratory chain. The mitoribosomes are attached to the mitochondrial inner membrane and translation products are cotranslationally integrated into the membrane. The polypeptide is Small ribosomal subunit protein uS4m (NAM9) (Saccharomyces cerevisiae (strain ATCC 204508 / S288c) (Baker's yeast)).